The primary structure comprises 485 residues: 6-phosphogluconate dehydrogenase, decarboxylating (485 aa).

NADP(+) contacts are provided by residues 12 to 17, 35 to 37, 77 to 79, and Asn105; these read GLAVMG, NRT, and VKA. Residues Asn105 and 131 to 133 each bind substrate; that span reads SGG. Lys186 (proton acceptor) is an active-site residue. 189–190 is a binding site for substrate; sequence HN. Glu193 serves as the catalytic Proton donor. Substrate-binding residues include Tyr194, Lys263, Arg290, Arg449, and His455.

This sequence belongs to the 6-phosphogluconate dehydrogenase family. As to quaternary structure, homodimer.

The catalysed reaction is 6-phospho-D-gluconate + NADP(+) = D-ribulose 5-phosphate + CO2 + NADPH. Its pathway is carbohydrate degradation; pentose phosphate pathway; D-ribulose 5-phosphate from D-glucose 6-phosphate (oxidative stage): step 3/3. In terms of biological role, catalyzes the oxidative decarboxylation of 6-phosphogluconate to ribulose 5-phosphate and CO(2), with concomitant reduction of NADP to NADPH. This chain is 6-phosphogluconate dehydrogenase, decarboxylating (6-PGD), found in Cunninghamella elegans.